The sequence spans 199 residues: Large ribosomal subunit protein uL18 (199 aa).

This sequence belongs to the universal ribosomal protein uL18 family. As to quaternary structure, part of the 50S ribosomal subunit. Contacts the 5S and 23S rRNAs.

This is one of the proteins that bind and probably mediate the attachment of the 5S RNA into the large ribosomal subunit, where it forms part of the central protuberance. This is Large ribosomal subunit protein uL18 from Saccharolobus solfataricus (strain ATCC 35092 / DSM 1617 / JCM 11322 / P2) (Sulfolobus solfataricus).